A 288-amino-acid polypeptide reads, in one-letter code: 33 kDa chaperonin (288 aa).

2 disulfide bridges follow: Cys-235–Cys-237 and Cys-268–Cys-271.

It belongs to the HSP33 family. Under oxidizing conditions two disulfide bonds are formed involving the reactive cysteines. Under reducing conditions zinc is bound to the reactive cysteines and the protein is inactive.

The protein resides in the cytoplasm. Functionally, redox regulated molecular chaperone. Protects both thermally unfolding and oxidatively damaged proteins from irreversible aggregation. Plays an important role in the bacterial defense system toward oxidative stress. The protein is 33 kDa chaperonin of Streptococcus thermophilus (strain CNRZ 1066).